We begin with the raw amino-acid sequence, 280 residues long: Polyamine aminopropyltransferase 2 (280 aa).

Positions 2–237 (ELWLDEALEL…GIIGFTYCSK (236 aa)) constitute a PABS domain. An S-methyl-5'-thioadenosine-binding site is contributed by glutamine 33. 2 residues coordinate spermidine: histidine 64 and aspartate 88. Residues glutamate 108 and 139–140 (DG) each bind S-methyl-5'-thioadenosine. Aspartate 157 serves as the catalytic Proton acceptor. Residue 157 to 160 (DSSD) participates in spermidine binding. Proline 164 serves as a coordination point for S-methyl-5'-thioadenosine.

It belongs to the spermidine/spermine synthase family. Homodimer or homotetramer.

The protein localises to the cytoplasm. The enzyme catalyses S-adenosyl 3-(methylsulfanyl)propylamine + putrescine = S-methyl-5'-thioadenosine + spermidine + H(+). Its pathway is amine and polyamine biosynthesis; spermidine biosynthesis; spermidine from putrescine: step 1/1. In terms of biological role, catalyzes the irreversible transfer of a propylamine group from the amino donor S-adenosylmethioninamine (decarboxy-AdoMet) to putrescine (1,4-diaminobutane) to yield spermidine. In Leptospira interrogans serogroup Icterohaemorrhagiae serovar Lai (strain 56601), this protein is Polyamine aminopropyltransferase 2.